Reading from the N-terminus, the 178-residue chain is Interleukin-10 (178 aa).

The N-terminal stretch at 1–18 (MPNPVLLYCLVLLAGMGT) is a signal peptide. 2 disulfides stabilise this stretch: Cys30-Cys126 and Cys80-Cys132. Asn134 is a glycosylation site (N-linked (GlcNAc...) asparagine).

This sequence belongs to the IL-10 family. In terms of assembly, homodimer. Interacts with IL10RA and IL10RB.

The protein localises to the secreted. Major immune regulatory cytokine that acts on many cells of the immune system where it has profound anti-inflammatory functions, limiting excessive tissue disruption caused by inflammation. Mechanistically, IL10 binds to its heterotetrameric receptor comprising IL10RA and IL10RB leading to JAK1 and STAT2-mediated phosphorylation of STAT3. In turn, STAT3 translocates to the nucleus where it drives expression of anti-inflammatory mediators. Targets antigen-presenting cells (APCs) such as macrophages and monocytes and inhibits their release of pro-inflammatory cytokines including granulocyte-macrophage colony-stimulating factor /GM-CSF, granulocyte colony-stimulating factor/G-CSF, IL-1 alpha, IL-1 beta, IL-6, IL-8 and TNF-alpha. Also interferes with antigen presentation by reducing the expression of MHC-class II and co-stimulatory molecules, thereby inhibiting their ability to induce T cell activation. In addition, controls the inflammatory response of macrophages by reprogramming essential metabolic pathways including mTOR signaling. The polypeptide is Interleukin-10 (IL10) (Marmota monax (Woodchuck)).